The sequence spans 368 residues: Phosphate acyltransferase (368 aa).

The segment at 337–368 is disordered; it reads LEQAARDASGAGQASPIAGQPAEPYAAQSSKA.

Belongs to the PlsX family. As to quaternary structure, homodimer. Probably interacts with PlsY.

It is found in the cytoplasm. It carries out the reaction a fatty acyl-[ACP] + phosphate = an acyl phosphate + holo-[ACP]. It functions in the pathway lipid metabolism; phospholipid metabolism. Functionally, catalyzes the reversible formation of acyl-phosphate (acyl-PO(4)) from acyl-[acyl-carrier-protein] (acyl-ACP). This enzyme utilizes acyl-ACP as fatty acyl donor, but not acyl-CoA. In Paraburkholderia phytofirmans (strain DSM 17436 / LMG 22146 / PsJN) (Burkholderia phytofirmans), this protein is Phosphate acyltransferase.